Consider the following 875-residue polypeptide: Neurotrypsin (875 aa).

Positions 1 to 20 (MTLARFALALLFGVLPEVVG) are cleaved as a signal peptide. N-linked (GlcNAc...) asparagine glycosylation occurs at Asn-26. The tract at residues 51-72 (QRHRRTRPPPPLPRFPRPPRAL) is disordered. A compositionally biased stretch (pro residues) spans 58–71 (PPPPLPRFPRPPRA). In terms of domain architecture, Kringle spans 93–165 (CPAGEPWVSV…GKVDWGYCDC (73 aa)). Cystine bridges form between Cys-93/Cys-165, Cys-109/Cys-149, Cys-138/Cys-163, Cys-195/Cys-259, Cys-208/Cys-269, Cys-239/Cys-249, Cys-305/Cys-369, Cys-318/Cys-379, Cys-349/Cys-359, Cys-412/Cys-475, Cys-425/Cys-485, Cys-455/Cys-465, Cys-525/Cys-589, Cys-538/Cys-599, Cys-569/Cys-579, Cys-619/Cys-750, Cys-661/Cys-677, Cys-765/Cys-831, Cys-794/Cys-808, and Cys-821/Cys-850. SRCR domains follow at residues 170 to 271 (VRLR…MCSF), 280 to 381 (IRLV…SCTP), 387 to 487 (IRLA…ACYP), and 500 to 601 (VRLM…ICDY). The segment at 619 to 630 (CGLRLLHRRQKR) is zymogen activation region. The Peptidase S1 domain occupies 631-874 (IIGGKNSLRG…FVPWIKSVTK (244 aa)). His-676 (charge relay system) is an active-site residue. Asn-683 carries N-linked (GlcNAc...) asparagine glycosylation. Asp-726 (charge relay system) is an active-site residue. Ser-825 functions as the Charge relay system in the catalytic mechanism.

It belongs to the peptidase S1 family.

The protein resides in the secreted. In terms of biological role, plays a role in neuronal plasticity and the proteolytic action may subserve structural reorganizations associated with learning and memory operations. The polypeptide is Neurotrypsin (PRSS12) (Saguinus labiatus (Red-chested mustached tamarin)).